Reading from the N-terminus, the 132-residue chain is Actin-related protein 2/3 complex subunit 5A (132 aa).

A2 carries the post-translational modification N-acetylalanine.

It belongs to the ARPC5 family. In terms of assembly, component of the Arp2/3 complex composed of ARP2, ARP3, ARPC1/p41-ARC, ARPC2/p34-ARC, ARPC3/p21-ARC, ARPC4/p20-ARC and ARPC5/p16-ARC. Expressed at low levels in all tissues with a relatively highest expression in inflorescences.

Its subcellular location is the cytoplasm. The protein localises to the cytoskeleton. The protein resides in the cell projection. Its function is as follows. Functions as a component of the Arp2/3 complex which is involved in regulation of actin polymerization and together with an activating nucleation-promoting factor (NPF) mediates the formation of branched actin networks. Arp2/3 complex plays a critical role in the control of cell morphogenesis via the modulation of cell polarity development. The sequence is that of Actin-related protein 2/3 complex subunit 5A (ARPC5A) from Arabidopsis thaliana (Mouse-ear cress).